The following is a 337-amino-acid chain: Glyceraldehyde-3-phosphate dehydrogenase 1 (337 aa).

Residues 12–13 (RI), Asp-34, and Arg-79 each bind NAD(+). D-glyceraldehyde 3-phosphate-binding positions include 150 to 152 (SCT), Thr-181, 210 to 211 (TG), and Arg-233. Cys-151 (nucleophile) is an active-site residue. NAD(+) is bound at residue Asn-315.

It belongs to the glyceraldehyde-3-phosphate dehydrogenase family. As to quaternary structure, homotetramer.

The protein resides in the cytoplasm. The catalysed reaction is D-glyceraldehyde 3-phosphate + phosphate + NAD(+) = (2R)-3-phospho-glyceroyl phosphate + NADH + H(+). It functions in the pathway carbohydrate degradation; glycolysis; pyruvate from D-glyceraldehyde 3-phosphate: step 1/5. The sequence is that of Glyceraldehyde-3-phosphate dehydrogenase 1 (GPD1) from Mucor circinelloides f. lusitanicus (Mucor racemosus var. lusitanicus).